The following is an 808-amino-acid chain: Receptor like protein 27 (808 aa).

The signal sequence occupies residues 1–31; it reads MLFFIKVFMKTILSVLLLFFIFASSFTLVVG. Topologically, residues 32–740 are extracellular; it reads LAGCRPDQIQ…DEDEEVLNWK (709 aa). N56, N68, N90, N103, N108, N144, and N167 each carry an N-linked (GlcNAc...) asparagine glycan. 12 LRR repeats span residues 96–120, 122–144, 145–170, 172–192, 193–218, 220–241, 242–265, 266–291, 293–314, 315–338, 340–363, and 364–387; these read LQHL…GFGN, NRLE…SFSN, LSQL…NLTK, SILV…LLTL, PFLS…STSS, LEFM…ISKL, INLK…LFSS, FKSL…SKIP, NLEN…LKNL, TKLE…FWNL, RLRR…VLVN, and SSVR…PLSI. N213 carries an N-linked (GlcNAc...) asparagine glycan. N313 carries N-linked (GlcNAc...) asparagine glycosylation. N363 carries N-linked (GlcNAc...) asparagine glycosylation. An LRR 13; degenerate repeat occupies 388–407; sequence NLLSAWNNSFTGNIPLETCN. N394, N407, and N420 each carry an N-linked (GlcNAc...) asparagine glycan. 10 LRR repeats span residues 408–434, 436–456, 457–481, 483–504, 505–529, 532–556, 601–625, 626–649, 650–673, and 675–698; these read RSSL…DFQE, LIVV…IFSD, GALL…LLNC, MLRF…WLKA, LPDL…DRGP, FPKL…YFVN, LTSY…IGLL, KALI…LANV, TELE…LKTL, and FLAY…QITG. N480 carries an N-linked (GlcNAc...) asparagine glycan. An N-linked (GlcNAc...) asparagine glycan is attached at N544. N-linked (GlcNAc...) asparagine glycosylation is found at N632 and N648. Residues 741–761 traverse the membrane as a helical segment; sequence AVVIGYWPGLLLGLIMAHVIA. Topologically, residues 762–808 are cytoplasmic; it reads SFKPKWLVKIVGPEKRKEDNPVRLFMTLDSRWDSFNNKKNVEQKSDM.

It belongs to the RLP family.

The protein localises to the cell membrane. The polypeptide is Receptor like protein 27 (Arabidopsis thaliana (Mouse-ear cress)).